Reading from the N-terminus, the 78-residue chain is Mitochondrial import inner membrane translocase subunit Tim9 (78 aa).

Positions 24–48 match the Twin CX3C motif motif; it reads CFTSCVNEFGSRTVNAKEESCANNC. 2 disulfide bridges follow: Cys24–Cys48 and Cys28–Cys44.

This sequence belongs to the small Tim family. As to quaternary structure, heterohexamer; composed of 3 copies of tim-9/tin-9.1 and 3 copies of tim-10/tin-10, named soluble 70 kDa complex. The complex associates with the tim-22 component of the TIM22 complex. Interacts with multi-pass transmembrane proteins in transit.

The protein resides in the mitochondrion inner membrane. Mitochondrial intermembrane chaperone that participates in the import and insertion of multi-pass transmembrane proteins into the mitochondrial inner membrane. May also be required for the transfer of beta-barrel precursors from the TOM complex to the sorting and assembly machinery (SAM complex) of the outer membrane. Acts as a chaperone-like protein that protects the hydrophobic precursors from aggregation and guide them through the mitochondrial intermembrane space. The protein is Mitochondrial import inner membrane translocase subunit Tim9 (tin-9.1) of Caenorhabditis briggsae.